A 172-amino-acid chain; its full sequence is C-phycocyanin-2 beta subunit (172 aa).

The residue at position 72 (asparagine 72) is an N4-methylasparagine. Positions 82 and 153 each coordinate (2R,3E)-phycocyanobilin.

This sequence belongs to the phycobiliprotein family. In terms of assembly, heterodimer of an alpha and a beta subunit, which further assembles into trimers and the trimers into hexamers. Contains two covalently linked bilin chromophores.

Its subcellular location is the cellular thylakoid membrane. In terms of biological role, light-harvesting photosynthetic bile pigment-protein from the phycobiliprotein complex (phycobilisome, PBS). Phycocyanin is the major phycobiliprotein in the PBS rod. The polypeptide is C-phycocyanin-2 beta subunit (cpcB2) (Microchaete diplosiphon (Fremyella diplosiphon)).